Reading from the N-terminus, the 79-residue chain is D-alanyl carrier protein (79 aa).

The Carrier domain maps to 1–77 (MSTKETVIDL…KIIQGIEELQ (77 aa)). Serine 35 is subject to O-(pantetheine 4'-phosphoryl)serine.

This sequence belongs to the DltC family. Post-translationally, 4'-phosphopantetheine is transferred from CoA to a specific serine of apo-DCP.

The protein localises to the cytoplasm. It participates in cell wall biogenesis; lipoteichoic acid biosynthesis. In terms of biological role, carrier protein involved in the D-alanylation of lipoteichoic acid (LTA). The loading of thioester-linked D-alanine onto DltC is catalyzed by D-alanine--D-alanyl carrier protein ligase DltA. The DltC-carried D-alanyl group is further transferred to cell membrane phosphatidylglycerol (PG) by forming an ester bond, probably catalyzed by DltD. D-alanylation of LTA plays an important role in modulating the properties of the cell wall in Gram-positive bacteria, influencing the net charge of the cell wall. The sequence is that of D-alanyl carrier protein from Streptococcus equi subsp. equi (strain 4047).